Here is a 64-residue protein sequence, read N- to C-terminus: Large ribosomal subunit protein bL32 (64 aa).

Basic residues predominate over residues 1–16; sequence MAVPKHRKSKAKKRSR. The tract at residues 1–22 is disordered; sequence MAVPKHRKSKAKKRSRQAANDK.

The protein belongs to the bacterial ribosomal protein bL32 family.

This chain is Large ribosomal subunit protein bL32, found in Brachyspira hyodysenteriae (strain ATCC 49526 / WA1).